Reading from the N-terminus, the 205-residue chain is Peptidyl-tRNA hydrolase (205 aa).

Tyr-14 serves as a coordination point for tRNA. The active-site Proton acceptor is the His-19. The tRNA site is built by Tyr-68, Asn-70, and Asn-116.

It belongs to the PTH family. As to quaternary structure, monomer.

It localises to the cytoplasm. The enzyme catalyses an N-acyl-L-alpha-aminoacyl-tRNA + H2O = an N-acyl-L-amino acid + a tRNA + H(+). Its function is as follows. Hydrolyzes ribosome-free peptidyl-tRNAs (with 1 or more amino acids incorporated), which drop off the ribosome during protein synthesis, or as a result of ribosome stalling. Catalyzes the release of premature peptidyl moieties from peptidyl-tRNA molecules trapped in stalled 50S ribosomal subunits, and thus maintains levels of free tRNAs and 50S ribosomes. The sequence is that of Peptidyl-tRNA hydrolase from Caulobacter vibrioides (strain ATCC 19089 / CIP 103742 / CB 15) (Caulobacter crescentus).